The chain runs to 78 residues: Large ribosomal subunit protein bL28 (78 aa).

The protein belongs to the bacterial ribosomal protein bL28 family.

This is Large ribosomal subunit protein bL28 from Pseudomonas aeruginosa (strain LESB58).